A 213-amino-acid chain; its full sequence is Ribosomal RNA small subunit methyltransferase G (213 aa).

Residues Gly72, Phe77, 125–126, and Arg141 each bind S-adenosyl-L-methionine; that span reads IE.

The protein belongs to the methyltransferase superfamily. RNA methyltransferase RsmG family.

It localises to the cytoplasm. The catalysed reaction is guanosine(527) in 16S rRNA + S-adenosyl-L-methionine = N(7)-methylguanosine(527) in 16S rRNA + S-adenosyl-L-homocysteine. In terms of biological role, specifically methylates the N7 position of guanine in position 527 of 16S rRNA. The sequence is that of Ribosomal RNA small subunit methyltransferase G from Rhizobium meliloti (strain 1021) (Ensifer meliloti).